Here is a 356-residue protein sequence, read N- to C-terminus: Peptide chain release factor 1 (356 aa).

Gln-233 bears the N5-methylglutamine mark.

It belongs to the prokaryotic/mitochondrial release factor family. In terms of processing, methylated by PrmC. Methylation increases the termination efficiency of RF1.

The protein localises to the cytoplasm. Peptide chain release factor 1 directs the termination of translation in response to the peptide chain termination codons UAG and UAA. In Shouchella clausii (strain KSM-K16) (Alkalihalobacillus clausii), this protein is Peptide chain release factor 1.